Reading from the N-terminus, the 273-residue chain is NH(3)-dependent NAD(+) synthetase (273 aa).

47 to 54 (GISGGQDS) is an ATP binding site. Mg(2+) is bound at residue D53. Position 139 (R139) interacts with deamido-NAD(+). T159 provides a ligand contact to ATP. E164 is a Mg(2+) binding site. The deamido-NAD(+) site is built by K172 and D179. Residues K188 and T210 each contribute to the ATP site. 259–260 (HK) contributes to the deamido-NAD(+) binding site.

The protein belongs to the NAD synthetase family. As to quaternary structure, homodimer.

It carries out the reaction deamido-NAD(+) + NH4(+) + ATP = AMP + diphosphate + NAD(+) + H(+). It participates in cofactor biosynthesis; NAD(+) biosynthesis; NAD(+) from deamido-NAD(+) (ammonia route): step 1/1. In terms of biological role, catalyzes the ATP-dependent amidation of deamido-NAD to form NAD. Uses ammonia as a nitrogen source. This Staphylococcus saprophyticus subsp. saprophyticus (strain ATCC 15305 / DSM 20229 / NCIMB 8711 / NCTC 7292 / S-41) protein is NH(3)-dependent NAD(+) synthetase.